The primary structure comprises 95 residues: Aspartyl/glutamyl-tRNA(Asn/Gln) amidotransferase subunit C (95 aa).

Belongs to the GatC family. Heterotrimer of A, B and C subunits.

The enzyme catalyses L-glutamyl-tRNA(Gln) + L-glutamine + ATP + H2O = L-glutaminyl-tRNA(Gln) + L-glutamate + ADP + phosphate + H(+). The catalysed reaction is L-aspartyl-tRNA(Asn) + L-glutamine + ATP + H2O = L-asparaginyl-tRNA(Asn) + L-glutamate + ADP + phosphate + 2 H(+). Its function is as follows. Allows the formation of correctly charged Asn-tRNA(Asn) or Gln-tRNA(Gln) through the transamidation of misacylated Asp-tRNA(Asn) or Glu-tRNA(Gln) in organisms which lack either or both of asparaginyl-tRNA or glutaminyl-tRNA synthetases. The reaction takes place in the presence of glutamine and ATP through an activated phospho-Asp-tRNA(Asn) or phospho-Glu-tRNA(Gln). In Maricaulis maris (strain MCS10) (Caulobacter maris), this protein is Aspartyl/glutamyl-tRNA(Asn/Gln) amidotransferase subunit C.